A 159-amino-acid polypeptide reads, in one-letter code: Protein-export protein SecB (159 aa).

This sequence belongs to the SecB family. Homotetramer, a dimer of dimers. One homotetramer interacts with 1 SecA dimer.

The protein resides in the cytoplasm. In terms of biological role, one of the proteins required for the normal export of preproteins out of the cell cytoplasm. It is a molecular chaperone that binds to a subset of precursor proteins, maintaining them in a translocation-competent state. It also specifically binds to its receptor SecA. In Aromatoleum aromaticum (strain DSM 19018 / LMG 30748 / EbN1) (Azoarcus sp. (strain EbN1)), this protein is Protein-export protein SecB.